A 950-amino-acid chain; its full sequence is Double-stranded RNA-binding protein Staufen homolog (950 aa).

3 disordered regions span residues 25–168 (VSGA…QQQQ), 202–274 (QQQL…QPST), and 288–342 (VTPV…NTKE). Positions 31 to 43 (QQRSMMSQQRGGS) are enriched in low complexity. A compositionally biased stretch (polar residues) spans 45–66 (AINSSKSPYQLQTSSISQFSHL). The span at 67–77 (QQQQQQQQQQQ) shows a compositional bias: low complexity. Over residues 78-122 (LVNNYHKQKQMSPDITSHQFSSSTGGGMPTQNGNYQSMSGSSIHT) the composition is skewed to polar residues. Low complexity-rich tracts occupy residues 130 to 143 (QLSLQHQHHQYSSQ), 153 to 168 (QQHHYQSQQMTQQQQQ), and 202 to 253 (QQQL…ILQH). Over residues 254 to 274 (SPTSGKSLSSAPHGTSVQPST) the composition is skewed to polar residues. The segment covering 313 to 322 (SGRDSVHVSD) has biased composition (basic and acidic residues). DRBM domains follow at residues 344 to 411 (TPMC…ETKC), 435 to 546 (TPTV…ILKN), 578 to 645 (SEIS…ELRK), and 690 to 758 (NPIS…LLGY). 2 disordered regions span residues 758–833 (YTKP…HTAS) and 922–950 (DIHPGGDGPQVKKDVLARSGSGMKKDFSK). Residues 765 to 782 (PTKSSFKNPSTGEAGQTN) are compositionally biased toward polar residues. Basic and acidic residues predominate over residues 922–937 (DIHPGGDGPQVKKDVL).

In terms of tissue distribution, strongly expressed in nervous tissue (at protein level).

The protein resides in the perikaryon. It localises to the cell projection. Its function is as follows. RNA-binding protein which is required for syntaxin location in sensory neurons during long-term synaptic facilitation. Binds to syntaxin mRNA and is required to maintain its accumulation at the axon hillock following neuronal stimulation and at the opposite pole in stable unstimulated sensory neurons. In Aplysia californica (California sea hare), this protein is Double-stranded RNA-binding protein Staufen homolog.